A 146-amino-acid polypeptide reads, in one-letter code: Angiogenin (146 aa).

A signal peptide spans Met-1–Ala-24. The residue at position 25 (Gln-25) is a Pyrrolidone carboxylic acid. His-37 acts as the Proton acceptor in catalysis. A tRNA-binding site is contributed by Arg-45. 3 cysteine pairs are disulfide-bonded: Cys-50–Cys-105, Cys-63–Cys-116, and Cys-81–Cys-131. The short motif at Arg-55 to Leu-59 is the Nucleolar localization signal element. Positions 105 and 127 each coordinate tRNA. The active-site Proton donor is the His-138.

It belongs to the pancreatic ribonuclease family. As to quaternary structure, homodimer. Interacts with RNH1; inhibiting ANG ribonuclease activity. Interacts with PCNA.

The protein localises to the secreted. It localises to the nucleus. It is found in the nucleolus. The protein resides in the cytoplasm. Its subcellular location is the stress granule. With respect to regulation, has weak tRNA ribonuclease activity by itself due to partial autoinhibition by its C-terminus, which folds into a short alpha-helix that partially occludes the substrate-binding site. In absence of stress, the ribonuclease activity is inhibited by RNH1 in the cytoplasm. In response to stress, dissociates from RNH1 in the cytoplasm and associates with cytoplasmic ribosomes with vacant A-sites: ribosomes directly activate the tRNA ribonuclease activity of ANG by refolding the C-terminal alpha-helix. In response to stress, the angiogenic activity of ANG is inhibited by RNH1 in the nucleus. In terms of biological role, secreted ribonuclease that can either promote or restrict cell proliferation of target cells, depending on the context. Endocytosed in target cells via its receptor PLXNB2 and translocates to the cytoplasm or nucleus. Under stress conditions, localizes to the cytoplasm and promotes the assembly of stress granules (SGs): specifically cleaves a subset of tRNAs within anticodon loops to produce tRNA-derived stress-induced fragments (tiRNAs), resulting in translation repression and inhibition of cell proliferation. tiRNas also prevent formation of apoptosome, thereby promoting cell survival. Preferentially cleaves RNAs between a pyrimidine and an adenosine residue, suggesting that it cleaves the anticodon loop of tRNA(Ala) (32-UUAGCAU-38) after positions 33 and 36. Cleaves a subset of tRNAs, including tRNA(Ala), tRNA(Glu), tRNA(Gly), tRNA(Lys), tRNA(Val), tRNA(His), tRNA(Asp) and tRNA(Sec). Under growth conditions and in differentiated cells, translocates to the nucleus and stimulates ribosomal RNA (rRNA) transcription, including that containing the initiation site sequences of 45S rRNA, thereby promoting cell growth and proliferation. Angiogenin induces vascularization of normal and malignant tissues via its ability to promote rRNA transcription. Involved in hematopoietic stem and progenitor cell (HSPC) growth and survival by promoting rRNA transcription in growth conditions and inhibiting translation in response to stress, respectively. Mediates the crosstalk between myeloid and intestinal epithelial cells to protect the intestinal epithelial barrier integrity: secreted by myeloid cells and promotes intestinal epithelial cells proliferation and survival. Also mediates osteoclast-endothelial cell crosstalk in growing bone: produced by osteoclasts and protects the neighboring vascular cells against senescence by promoting rRNA transcription. In Rhinopithecus avunculus (Tonkin snub-nosed monkey), this protein is Angiogenin (ANG).